We begin with the raw amino-acid sequence, 311 residues long: MSNATLLTAFILTGLPHAPGLDAPLFGIFLVVYVLTVLGNLLILLVIRVDSHLHTPMYYFLTNLSFIDMWFSTVTVPKMLMTLVSPSGRTISFHSCVAQLYFFHFLGSTECFLYTVMSYDRYLAISYPLRYTNMMTGRSCALLATGTWLSGSLHSAVQTILTFHLPYCGPNQIQHYFCDAPPILKLACADTSANEMVIFVNIGLVASGCFVLIVLSYVSIVCSILRIRTSEGRHRAFQTCASHCIVVLCFFGPGLFIYLRPGSRDALHGVVAVFYTTLTPLFNPVVYTLRNKEVKKALLKLKNGSVFAQGE.

Residues 1-23 (MSNATLLTAFILTGLPHAPGLDA) lie on the Extracellular side of the membrane. Asn3 is a glycosylation site (N-linked (GlcNAc...) asparagine). Residues 24-44 (PLFGIFLVVYVLTVLGNLLIL) form a helical membrane-spanning segment. Over 45–52 (LVIRVDSH) the chain is Cytoplasmic. Residues 53-73 (LHTPMYYFLTNLSFIDMWFST) traverse the membrane as a helical segment. The Extracellular segment spans residues 74-98 (VTVPKMLMTLVSPSGRTISFHSCVA). Cys96 and Cys188 are joined by a disulfide. A helical transmembrane segment spans residues 99–119 (QLYFFHFLGSTECFLYTVMSY). Over 120–138 (DRYLAISYPLRYTNMMTGR) the chain is Cytoplasmic. The helical transmembrane segment at 139 to 159 (SCALLATGTWLSGSLHSAVQT) threads the bilayer. Residues 160–196 (ILTFHLPYCGPNQIQHYFCDAPPILKLACADTSANEM) are Extracellular-facing. Residues 197–216 (VIFVNIGLVASGCFVLIVLS) traverse the membrane as a helical segment. Residues 217-236 (YVSIVCSILRIRTSEGRHRA) are Cytoplasmic-facing. A helical transmembrane segment spans residues 237 to 257 (FQTCASHCIVVLCFFGPGLFI). The Extracellular segment spans residues 258 to 268 (YLRPGSRDALH). Residues 269 to 289 (GVVAVFYTTLTPLFNPVVYTL) form a helical membrane-spanning segment. Over 290 to 311 (RNKEVKKALLKLKNGSVFAQGE) the chain is Cytoplasmic.

This sequence belongs to the G-protein coupled receptor 1 family.

Its subcellular location is the cell membrane. Functionally, odorant receptor. The polypeptide is Olfactory receptor 10G7 (OR10G7) (Homo sapiens (Human)).